A 61-amino-acid polypeptide reads, in one-letter code: Small ribosomal subunit protein uS14 (61 aa).

4 residues coordinate Zn(2+): Cys-24, Cys-27, Cys-40, and Cys-43.

This sequence belongs to the universal ribosomal protein uS14 family. Zinc-binding uS14 subfamily. As to quaternary structure, part of the 30S ribosomal subunit. Contacts proteins S3 and S10. Zn(2+) serves as cofactor.

Its function is as follows. Binds 16S rRNA, required for the assembly of 30S particles and may also be responsible for determining the conformation of the 16S rRNA at the A site. This Nitratidesulfovibrio vulgaris (strain ATCC 29579 / DSM 644 / CCUG 34227 / NCIMB 8303 / VKM B-1760 / Hildenborough) (Desulfovibrio vulgaris) protein is Small ribosomal subunit protein uS14.